Here is a 468-residue protein sequence, read N- to C-terminus: Probable cytosol aminopeptidase (468 aa).

Lysine 242 and aspartate 247 together coordinate Mn(2+). The active site involves lysine 254. Aspartate 265, aspartate 324, and glutamate 326 together coordinate Mn(2+). The active site involves arginine 328.

This sequence belongs to the peptidase M17 family. The cofactor is Mn(2+).

It is found in the cytoplasm. The enzyme catalyses Release of an N-terminal amino acid, Xaa-|-Yaa-, in which Xaa is preferably Leu, but may be other amino acids including Pro although not Arg or Lys, and Yaa may be Pro. Amino acid amides and methyl esters are also readily hydrolyzed, but rates on arylamides are exceedingly low.. It carries out the reaction Release of an N-terminal amino acid, preferentially leucine, but not glutamic or aspartic acids.. Presumably involved in the processing and regular turnover of intracellular proteins. Catalyzes the removal of unsubstituted N-terminal amino acids from various peptides. The sequence is that of Probable cytosol aminopeptidase from Neisseria meningitidis serogroup A / serotype 4A (strain DSM 15465 / Z2491).